Consider the following 483-residue polypeptide: UDP-glycosyltransferase 85C1 (483 aa).

Residues Ser304, Trp360–Cys361, His378–Glu386, and Ile400–Gln403 each bind UDP-alpha-D-glucose.

Belongs to the UDP-glycosyltransferase family.

In terms of biological role, may glycosylate diterpenes or flavonols in leaves. In Stevia rebaudiana (Stevia), this protein is UDP-glycosyltransferase 85C1.